The following is a 201-amino-acid chain: Glycerol-3-phosphate acyltransferase (201 aa).

The next 6 membrane-spanning stretches (helical) occupy residues 10–30 (MLIG…GLIL), 60–80 (LAAA…LIAA), 86–106 (AAIA…WIGF), 116–136 (LGVL…AWIV), 139–159 (LLTR…PIAL), and 166–186 (ALAA…RANI).

Belongs to the PlsY family. In terms of assembly, probably interacts with PlsX.

The protein resides in the cell inner membrane. It carries out the reaction an acyl phosphate + sn-glycerol 3-phosphate = a 1-acyl-sn-glycero-3-phosphate + phosphate. It participates in lipid metabolism; phospholipid metabolism. Its function is as follows. Catalyzes the transfer of an acyl group from acyl-phosphate (acyl-PO(4)) to glycerol-3-phosphate (G3P) to form lysophosphatidic acid (LPA). This enzyme utilizes acyl-phosphate as fatty acyl donor, but not acyl-CoA or acyl-ACP. This is Glycerol-3-phosphate acyltransferase from Brucella ovis (strain ATCC 25840 / 63/290 / NCTC 10512).